The following is a 377-amino-acid chain: MIINHNLMANNALRNMNVNSNNASKAMEKLSSGLRINRAGDDAAGLAISEKMRGQINGLNQASSNAQDSISLIQTAEGALNETHSILQRMRTLAVQSSNDTNTTTDRSAIQDEVNQLTDEIDRIANTTEFNTQKLLDGSKVGLVDAKDADASVQLNTSANISLASNFSTTSATGIADSFTVTITRTHGTAGATFASTDYDVALVGGTELIEHSSSSLTYDTKAINLVGMIKCFSIRTNDTIRKVSHVRTVKALSMQIGAIVTNMLIGINSMKATDIGVRNTSGKALDISTASKATGAITQINNAIETVSTQRSKLGAYQNRLEHTINNLGTSSENLTSAESRIRDVDMASEMSEYSKNNILSQTAQAMLAQANQQTQ.

This sequence belongs to the bacterial flagellin family.

The protein resides in the secreted. Its subcellular location is the bacterial flagellum. In terms of biological role, flagellin is the subunit protein which polymerizes to form the filaments of bacterial flagella. The chain is Flagellin (fla) from Clostridium tyrobutyricum.